Consider the following 299-residue polypeptide: ATP phosphoribosyltransferase (299 aa).

The protein belongs to the ATP phosphoribosyltransferase family. Long subfamily. Equilibrium between an active dimeric form, an inactive hexameric form and higher aggregates. Interconversion between the various forms is largely reversible and is influenced by the natural substrates and inhibitors of the enzyme. Mg(2+) is required as a cofactor.

It localises to the cytoplasm. The catalysed reaction is 1-(5-phospho-beta-D-ribosyl)-ATP + diphosphate = 5-phospho-alpha-D-ribose 1-diphosphate + ATP. It functions in the pathway amino-acid biosynthesis; L-histidine biosynthesis; L-histidine from 5-phospho-alpha-D-ribose 1-diphosphate: step 1/9. With respect to regulation, feedback inhibited by histidine. Its function is as follows. Catalyzes the condensation of ATP and 5-phosphoribose 1-diphosphate to form N'-(5'-phosphoribosyl)-ATP (PR-ATP). Has a crucial role in the pathway because the rate of histidine biosynthesis seems to be controlled primarily by regulation of HisG enzymatic activity. This chain is ATP phosphoribosyltransferase, found in Buchnera aphidicola subsp. Schlechtendalia chinensis.